Consider the following 382-residue polypeptide: D-galactonate dehydratase (382 aa).

Mg(2+) is bound at residue Asp-183. The active-site Proton donor is the His-185. Residues Glu-209 and Glu-235 each contribute to the Mg(2+) site. His-285 serves as the catalytic Proton acceptor.

Belongs to the mandelate racemase/muconate lactonizing enzyme family. GalD subfamily. It depends on Mg(2+) as a cofactor.

It catalyses the reaction D-galactonate = 2-dehydro-3-deoxy-D-galactonate + H2O. It functions in the pathway carbohydrate acid metabolism; D-galactonate degradation; D-glyceraldehyde 3-phosphate and pyruvate from D-galactonate: step 1/3. Its function is as follows. Catalyzes the dehydration of D-galactonate to 2-keto-3-deoxy-D-galactonate. The chain is D-galactonate dehydratase from Salmonella dublin (strain CT_02021853).